Consider the following 454-residue polypeptide: DNA-binding protein (454 aa).

Residues 1 to 41 (MSHKKVVAISESSSDEEVPVAPPTAPPKKRQRKAVEEPRGH) are disordered. Tyr129 is subject to Phosphotyrosine; by host. Zn(2+)-binding residues include Cys213 and His215. The interval 226-260 (VEMDVNSENAQRALKENPEKTKIVSNRWGRNVVQF) is flexible loop. Residues Cys268, Cys284, Cys325, Cys327, Cys378, and Cys394 each coordinate Zn(2+). Positions 440 to 454 (TILPQGQHDDDLVLF) are C-terminal arm, DBP binding.

It belongs to the adenoviridae E2A DNA-binding protein family. As to quaternary structure, homomultimerizes on viral ssDNA bound to pTP. Forms a initiation complex with viral polymerase, pTP and hosts NFIA and POU2F1/OCT1. Interacts with host SRCAP.

The protein localises to the host nucleus. Functionally, plays a role in the elongation phase of viral strand displacement replication by unwinding the template in an ATP-independent fashion, employing its capacity to form multimers. Also enhances the rate of initiation. Released from template upon second strand synthesis. Assembles in complex with viral pTP, viral pol, host NFIA and host POU2F1/OCT1 on viral origin of replication. Covers the whole ssDNA genome during synthesis. The complementary strand synthesis induces its relese from DNA template. May inhibit cellular transcription mediated by the interaction between host SRCAP and CBP. The protein is DNA-binding protein of Canine adenovirus serotype 1 (strain CLL) (CAdV-1).